Reading from the N-terminus, the 291-residue chain is Cytosolic Fe-S cluster assembly factor CFD1 (291 aa).

An ATP-binding site is contributed by G24–S31. [4Fe-4S] cluster-binding residues include C199 and C202. A disordered region spans residues E270–Q291. Residues K276 to R285 are compositionally biased toward basic and acidic residues.

The protein belongs to the Mrp/NBP35 ATP-binding proteins family. NUBP2/CFD1 subfamily. As to quaternary structure, heterotetramer of 2 NBP35 and 2 CFD1 chains. The cofactor is [4Fe-4S] cluster.

Its subcellular location is the cytoplasm. Its function is as follows. Component of the cytosolic iron-sulfur (Fe/S) protein assembly (CIA) machinery. Required for maturation of extramitochondrial Fe-S proteins. The NBP35-CFD1 heterotetramer forms a Fe-S scaffold complex, mediating the de novo assembly of an Fe-S cluster and its transfer to target apoproteins. Required for biogenesis and export of both ribosomal subunits, which may reflect a role in assembly of the Fe/S clusters in RLI1, a protein which performs rRNA processing and ribosome export. This is Cytosolic Fe-S cluster assembly factor CFD1 from Yarrowia lipolytica (strain CLIB 122 / E 150) (Yeast).